We begin with the raw amino-acid sequence, 154 residues long: Myoglobin (154 aa).

In terms of domain architecture, Globin spans Gly-2–Lys-148. The residue at position 4 (Ser-4) is a Phosphoserine. His-65 contacts nitrite. His-65 contributes to the O2 binding site. Thr-68 carries the post-translational modification Phosphothreonine. Heme b is bound at residue His-94.

It belongs to the globin family. As to quaternary structure, monomeric.

It is found in the cytoplasm. The protein resides in the sarcoplasm. It catalyses the reaction Fe(III)-heme b-[protein] + nitric oxide + H2O = Fe(II)-heme b-[protein] + nitrite + 2 H(+). It carries out the reaction H2O2 + AH2 = A + 2 H2O. Monomeric heme protein which primary function is to store oxygen and facilitate its diffusion within muscle tissues. Reversibly binds oxygen through a pentacoordinated heme iron and enables its timely and efficient release as needed during periods of heightened demand. Depending on the oxidative conditions of tissues and cells, and in addition to its ability to bind oxygen, it also has a nitrite reductase activity whereby it regulates the production of bioactive nitric oxide. Under stress conditions, like hypoxia and anoxia, it also protects cells against reactive oxygen species thanks to its pseudoperoxidase activity. The protein is Myoglobin (MB) of Pongo pygmaeus (Bornean orangutan).